The chain runs to 325 residues: Secreted frizzled-related protein 3 (325 aa).

Positions 1–32 (MVCGSPGGMLLLRAGLLALAALCLLRVPGARA) are cleaved as a signal peptide. Residues 33 to 150 (AACEPVRIPL…VYDRGVCISP (118 aa)) form the FZ domain. 5 disulfides stabilise this stretch: Cys35-Cys96, Cys43-Cys89, Cys80-Cys119, Cys108-Cys147, and Cys112-Cys136. The N-linked (GlcNAc...) asparagine glycan is linked to Asn49. Residues 178–298 (CKCKPIRATQ…WDMKLRHLGL (121 aa)) form the NTR domain. Positions 297–325 (GLSKSDSSNSDSTQSQKSGRNSNPRQARN) are disordered. Residues 299-314 (SKSDSSNSDSTQSQKS) show a composition bias toward low complexity. Residues 315–325 (GRNSNPRQARN) are compositionally biased toward polar residues.

It belongs to the secreted frizzled-related protein (sFRP) family. In terms of assembly, interacts with MYOC. Expressed primarily in the cartilaginous cores of the long bone during embryonic and fetal development and in the appendicular skeleton (6-13 weeks). At 13 weeks of gestation, transcripts were present in early chondroblasts of the tarsal bones of the foot, the carpal bones of the hands and the epiphysis of long bones. Highly expressed in placenta and heart, followed by brain, skeletal muscle, kidney and pancreas. Weakly expressed in lung and liver.

Its subcellular location is the secreted. Functionally, soluble frizzled-related proteins (sFRPS) function as modulators of Wnt signaling through direct interaction with Wnts. They have a role in regulating cell growth and differentiation in specific cell types. SFRP3/FRZB appears to be involved in limb skeletogenesis. Antagonist of Wnt8 signaling. Regulates chondrocyte maturation and long bone development. In Homo sapiens (Human), this protein is Secreted frizzled-related protein 3 (FRZB).